Here is an 890-residue protein sequence, read N- to C-terminus: Alanine--tRNA ligase (890 aa).

Zn(2+) is bound by residues H573, H577, C676, and H680.

Belongs to the class-II aminoacyl-tRNA synthetase family. Requires Zn(2+) as cofactor.

It localises to the cytoplasm. The catalysed reaction is tRNA(Ala) + L-alanine + ATP = L-alanyl-tRNA(Ala) + AMP + diphosphate. In terms of biological role, catalyzes the attachment of alanine to tRNA(Ala) in a two-step reaction: alanine is first activated by ATP to form Ala-AMP and then transferred to the acceptor end of tRNA(Ala). Also edits incorrectly charged Ser-tRNA(Ala) and Gly-tRNA(Ala) via its editing domain. This chain is Alanine--tRNA ligase, found in Corynebacterium efficiens (strain DSM 44549 / YS-314 / AJ 12310 / JCM 11189 / NBRC 100395).